We begin with the raw amino-acid sequence, 293 residues long: 4-hydroxy-tetrahydrodipicolinate synthase (293 aa).

Thr44 lines the pyruvate pocket. Residue Tyr132 is the Proton donor/acceptor of the active site. Catalysis depends on Lys161, which acts as the Schiff-base intermediate with substrate. Ile203 provides a ligand contact to pyruvate.

The protein belongs to the DapA family. In terms of assembly, homotetramer; dimer of dimers.

It is found in the cytoplasm. It catalyses the reaction L-aspartate 4-semialdehyde + pyruvate = (2S,4S)-4-hydroxy-2,3,4,5-tetrahydrodipicolinate + H2O + H(+). It functions in the pathway amino-acid biosynthesis; L-lysine biosynthesis via DAP pathway; (S)-tetrahydrodipicolinate from L-aspartate: step 3/4. Its function is as follows. Catalyzes the condensation of (S)-aspartate-beta-semialdehyde [(S)-ASA] and pyruvate to 4-hydroxy-tetrahydrodipicolinate (HTPA). In Sulfurihydrogenibium sp. (strain YO3AOP1), this protein is 4-hydroxy-tetrahydrodipicolinate synthase.